Consider the following 465-residue polypeptide: Argininosuccinate lyase (465 aa).

The protein belongs to the lyase 1 family. Argininosuccinate lyase subfamily.

It localises to the cytoplasm. The catalysed reaction is 2-(N(omega)-L-arginino)succinate = fumarate + L-arginine. It participates in amino-acid biosynthesis; L-arginine biosynthesis; L-arginine from L-ornithine and carbamoyl phosphate: step 3/3. The polypeptide is Argininosuccinate lyase (Deinococcus geothermalis (strain DSM 11300 / CIP 105573 / AG-3a)).